The sequence spans 933 residues: Thyroid peroxidase (933 aa).

An N-terminal signal peptide occupies residues 1–18; that stretch reads MRALAVLSVTLVMACTEA. At 19-846 the chain is on the extracellular side; that stretch reads FFPFISRGKE…TCVDSGRLPR (828 aa). Asn129 carries an N-linked (GlcNAc...) asparagine glycan. Cys142 and Cys158 are disulfide-bonded. Asp238 serves as a coordination point for heme b. The active-site Proton acceptor is the His239. A Ca(2+)-binding site is contributed by Asp240. 2 cysteine pairs are disulfide-bonded: Cys259/Cys269 and Cys263/Cys286. Residue Asn307 is glycosylated (N-linked (GlcNAc...) asparagine). The Ca(2+) site is built by Thr321, Phe323, Asp325, and Ser327. N-linked (GlcNAc...) asparagine glycosylation occurs at Asn342. The heme b site is built by Glu399 and His494. Asn569 is a glycosylation site (N-linked (GlcNAc...) asparagine). Disulfide bonds link Cys598/Cys655 and Cys696/Cys721. The 56-residue stretch at 740–795 folds into the Sushi domain; sequence DKCGFPESVENGDFVHCEESGRRVLVYSCRHGYELQGREQLTCTQEGWDFQPPLCK. An EGF-like; calcium-binding domain is found at 796-839; that stretch reads DVNECADGAHPPCHASARCRNTKGGFQCLCADPYELGDDGRTCV. Disulfide bonds link Cys800/Cys814, Cys808/Cys823, and Cys825/Cys838. Residues 847 to 871 form a helical membrane-spanning segment; that stretch reads VTWISMSLAALLIGGFAGLTSTVIC. Residues 872–933 are Cytoplasmic-facing; it reads RWTRTGTKST…RDTHRLPRAL (62 aa). Positions 881–933 are disordered; the sequence is TLPISETGGGTPELRCGKHQAVGTSPQRAAAQDSEQESAGMEGRDTHRLPRAL. Residues 922–933 are compositionally biased toward basic and acidic residues; it reads EGRDTHRLPRAL.

It belongs to the peroxidase family. XPO subfamily. Interacts with DUOX1, DUOX2 and CYBA. Ca(2+) is required as a cofactor. The cofactor is heme b. Glycosylated. In terms of processing, heme is covalently bound through a H(2)O(2)-dependent autocatalytic process. Heme insertion is important for the delivery of protein at the cell surface. Post-translationally, cleaved in its N-terminal part.

The protein localises to the membrane. Its subcellular location is the cell surface. The enzyme catalyses 2 iodide + H2O2 + 2 H(+) = diiodine + 2 H2O. The catalysed reaction is [thyroglobulin]-L-tyrosine + iodide + H2O2 + H(+) = [thyroglobulin]-3-iodo-L-tyrosine + 2 H2O. It carries out the reaction [thyroglobulin]-3-iodo-L-tyrosine + iodide + H2O2 + H(+) = [thyroglobulin]-3,5-diiodo-L-tyrosine + 2 H2O. It catalyses the reaction 2 [thyroglobulin]-3,5-diiodo-L-tyrosine + H2O2 = [thyroglobulin]-L-thyroxine + [thyroglobulin]-dehydroalanine + 2 H2O. The enzyme catalyses [thyroglobulin]-3-iodo-L-tyrosine + [thyroglobulin]-3,5-diiodo-L-tyrosine + H2O2 = [thyroglobulin]-3,3',5-triiodo-L-thyronine + [thyroglobulin]-dehydroalanine + 2 H2O. It participates in hormone biosynthesis; thyroid hormone biosynthesis. Functionally, iodination and coupling of the hormonogenic tyrosines in thyroglobulin to yield the thyroid hormones T(3) and T(4). In Homo sapiens (Human), this protein is Thyroid peroxidase.